The following is a 414-amino-acid chain: Particulate methane monooxygenase alpha subunit (414 aa).

Positions 1 to 32 are cleaved as a signal peptide; the sequence is MKTIKDRIAKWSAIGLLSAVAATAFYAPSASA. The Cu cation site is built by His-33, His-48, His-72, His-137, and His-139. The cupredoxin domain used to construct soluble pmoB (spmoB) stretch occupies residues 33–172; the sequence is HGEKSQAAFM…MSEFRNPVTT (140 aa). 2 consecutive transmembrane segments (helical) span residues 186 to 206 and 235 to 255; these read GNTY…IGYW and VAMG…SSAN. Positions 265–414 are cupredoxin domain used to construct soluble pmoB (spmoB); that stretch reads QAGTMRGMKP…IDAPLIPSFM (150 aa).

In terms of assembly, m.capsulatus has two forms of methane monooxygenase, a soluble (sMMO) and a membrane-bound (particulate) type (pMMO). The particulate type is a nonamer composed of three alpha:beta:gamma heterotrimeric protomers assembled into a cylindrical structure; the beta and gamma subunits comprise the bulk of the membrane-spanning regions and the soluble regions are derived primarily from alpha subunits which form two antiparallel beta-barrel-like structures each. This assembly, also called pMMO hydroxylase (pMMO-H), is proposed to associate with methanol dehydrogenase (MDH), also designated as pMMO-R, to form the pMMO-C complex which seems to have greater methane monooxygenase activity. It depends on Cu(2+) as a cofactor.

The protein resides in the membrane. The enzyme catalyses methane + a quinol + O2 = methanol + a quinone + H2O. In terms of biological role, methane monooxygenase is responsible for the initial oxygenation of methane to methanol in methanotrophs. At least in vitro, specific quinols can replace NADH as reductants. This is Particulate methane monooxygenase alpha subunit (pmoB1) from Methylococcus capsulatus (strain ATCC 33009 / NCIMB 11132 / Bath).